Here is a 226-residue protein sequence, read N- to C-terminus: Chalcone--flavanone isomerase (226 aa).

Substrate is bound by residues threonine 47, asparagine 112, and serine 189.

This sequence belongs to the chalcone isomerase family.

The catalysed reaction is a chalcone = a flavanone.. It participates in secondary metabolite biosynthesis; flavonoid biosynthesis. Its function is as follows. Catalyzes the intramolecular cyclization of bicyclic chalcones into tricyclic (S)-flavanones. Responsible for the isomerization of 4,2',4',6'-tetrahydroxychalcone (also termed chalcone) into naringenin. The protein is Chalcone--flavanone isomerase (CHI) of Allium cepa (Onion).